A 311-amino-acid chain; its full sequence is Nucleotide-binding protein Acel_1111 (311 aa).

30 to 37 (GLSGAGRS) contacts ATP. 81–84 (DVRS) is a GTP binding site.

It belongs to the RapZ-like family.

Displays ATPase and GTPase activities. This is Nucleotide-binding protein Acel_1111 from Acidothermus cellulolyticus (strain ATCC 43068 / DSM 8971 / 11B).